The primary structure comprises 418 residues: Alpha-(1-&gt;3)-arabinofuranosyltransferase (418 aa).

Transmembrane regions (helical) follow at residues 25-45 (NAVA…VLAI), 81-101 (YLYN…THFT), 102-122 (LARW…FGLL), 125-145 (LSGW…AMLT), 153-173 (IFSN…WCVV), 183-203 (VIGL…LPLV), 210-230 (LILG…LVPG), 266-286 (MEIT…LALL), 293-312 (PYFW…FFLS), 327-349 (IFTL…AYFF), and 372-392 (ATVG…IWFI).

The protein belongs to the glycosyltransferase 87 family.

It localises to the cell membrane. It carries out the reaction Adds an alpha-D-arabinofuranosyl group from trans,octacis-decaprenylphospho-beta-D-arabinofuranose at the 3-O-position of an alpha-(1-&gt;5)-arabinofuranan chain attached to a beta-(1-&gt;5)-galactofuranan chain.. The protein operates within cell wall biogenesis; cell wall polysaccharide biosynthesis. Functionally, involved in the biosynthesis of the arabinogalactan (AG) region of the mycolylarabinogalactan-peptidoglycan (mAGP) complex, an essential component of the corynebacterial cell wall. Catalyzes the addition of an arabinofuranosyl (Araf) residue from the sugar donor beta-D-arabinofuranosyl-1-monophosphoryldecaprenol (DPA) on the C-3 of an alpha-(1-&gt;5)-linked Araf from the arabinan backbone of AG. This is Alpha-(1-&gt;3)-arabinofuranosyltransferase from Corynebacterium glutamicum (strain ATCC 13032 / DSM 20300 / JCM 1318 / BCRC 11384 / CCUG 27702 / LMG 3730 / NBRC 12168 / NCIMB 10025 / NRRL B-2784 / 534).